Reading from the N-terminus, the 416-residue chain is Diaminopimelate decarboxylase (416 aa).

At lysine 60 the chain carries N6-(pyridoxal phosphate)lysine. Pyridoxal 5'-phosphate contacts are provided by residues glycine 240 and 274-277 (EPGR). Arginine 277, arginine 313, and tyrosine 317 together coordinate substrate. Cysteine 343 serves as the catalytic Proton donor. Residues glutamate 344 and tyrosine 371 each contribute to the substrate site. Residue tyrosine 371 participates in pyridoxal 5'-phosphate binding.

Belongs to the Orn/Lys/Arg decarboxylase class-II family. LysA subfamily. Homodimer. The cofactor is pyridoxal 5'-phosphate.

The catalysed reaction is meso-2,6-diaminopimelate + H(+) = L-lysine + CO2. It participates in amino-acid biosynthesis; L-lysine biosynthesis via DAP pathway; L-lysine from DL-2,6-diaminopimelate: step 1/1. Its function is as follows. Specifically catalyzes the decarboxylation of meso-diaminopimelate (meso-DAP) to L-lysine. This chain is Diaminopimelate decarboxylase, found in Pseudomonas fluorescens.